The following is a 309-amino-acid chain: Virulence regulon transcriptional activator VirB (309 aa).

Positions 152 to 171 (KDIAKKENLSRAKVTRAFQA) form a DNA-binding region, H-T-H motif.

This sequence belongs to the ParB family.

Its function is as follows. Transcription activator for the invasion antigens IpaB, IpaC and IpaD. VirB is itself regulated by VirF. This is Virulence regulon transcriptional activator VirB (virB) from Shigella flexneri.